A 351-amino-acid polypeptide reads, in one-letter code: MTVTMTLGQLAEALGATLKGPEALQITGLATLQEAGSGQLSFLANKQYRKFLESSQASAVLLKAEDAEGFAGNALIVADPYLAYARISHLFDPKPKAVAGIHPSAVVAEDAQVDTSASIGPFAVIESGARIGADVTIGAHCFIGARCVVGEGGWLAPRVTLYHDVIIGKRVVIQSGAVIGGEGFGFANEKGIWRKIAQIGGVTLGDDVEIGVNTAVDRGALSDTRIGDGVKLDNQIQIAHNVQVGDHTAMAACVGISGSTRIGKHCMIAGGVGMVGHIDVCDNVFVSGMTMVTRSITEPGGYSSGTAMQPLAEWRKSAARIRQLDEMSKRLQQLEKRVDTVTSGGQPTSEG.

The active-site Proton acceptor is His240.

Belongs to the transferase hexapeptide repeat family. LpxD subfamily. Homotrimer.

The catalysed reaction is a UDP-3-O-[(3R)-3-hydroxyacyl]-alpha-D-glucosamine + a (3R)-hydroxyacyl-[ACP] = a UDP-2-N,3-O-bis[(3R)-3-hydroxyacyl]-alpha-D-glucosamine + holo-[ACP] + H(+). It functions in the pathway bacterial outer membrane biogenesis; LPS lipid A biosynthesis. Its function is as follows. Catalyzes the N-acylation of UDP-3-O-acylglucosamine using 3-hydroxyacyl-ACP as the acyl donor. Is involved in the biosynthesis of lipid A, a phosphorylated glycolipid that anchors the lipopolysaccharide to the outer membrane of the cell. The chain is UDP-3-O-acylglucosamine N-acyltransferase from Pseudomonas entomophila (strain L48).